Consider the following 499-residue polypeptide: Ethanolamine-phosphate phospho-lyase (499 aa).

Residue Lys278 is modified to N6-(pyridoxal phosphate)lysine.

This sequence belongs to the class-III pyridoxal-phosphate-dependent aminotransferase family. In terms of assembly, homotetramer. Pyridoxal 5'-phosphate is required as a cofactor.

It is found in the mitochondrion. The catalysed reaction is phosphoethanolamine + H2O = acetaldehyde + NH4(+) + phosphate. Its function is as follows. Catalyzes the pyridoxal-phosphate-dependent breakdown of phosphoethanolamine, converting it to ammonia, inorganic phosphate and acetaldehyde. The polypeptide is Ethanolamine-phosphate phospho-lyase (Etnppl) (Mus musculus (Mouse)).